The sequence spans 604 residues: Glutamine--fructose-6-phosphate aminotransferase [isomerizing] (604 aa).

Cys2 functions as the Nucleophile; for GATase activity in the catalytic mechanism. Residues 2 to 219 (CGIMGAVSER…EGDSACVTTQ (218 aa)) form the Glutamine amidotransferase type-2 domain. 2 consecutive SIS domains span residues 279 to 427 (LRAS…DNRA) and 454 to 594 (LASL…VDQP). Lys599 (for Fru-6P isomerization activity) is an active-site residue.

In terms of assembly, homodimer.

Its subcellular location is the cytoplasm. It catalyses the reaction D-fructose 6-phosphate + L-glutamine = D-glucosamine 6-phosphate + L-glutamate. Its function is as follows. Catalyzes the first step in hexosamine metabolism, converting fructose-6P into glucosamine-6P using glutamine as a nitrogen source. The polypeptide is Glutamine--fructose-6-phosphate aminotransferase [isomerizing] (Legionella pneumophila (strain Paris)).